The sequence spans 59 residues: Protein NapE (59 aa).

Residues 1–18 lie on the Cytoplasmic side of the membrane; it reads MIDSAKETDRPKHRKRDE. The helical transmembrane segment at 19-43 threads the bilayer; sequence VIAFLILAVVIWPILSVAIVGGYGF. The Periplasmic portion of the chain corresponds to 44-59; the sequence is LVWMSQIIFGPPGPMH.

The protein resides in the cell inner membrane. May be involved in mediating interactions between NapC and a quinol oxidase. The protein is Protein NapE (napE) of Paracoccus pantotrophus (Thiosphaera pantotropha).